Here is a 134-residue protein sequence, read N- to C-terminus: Phosphomevalonate dehydratase small subunit (134 aa).

Ser62 acts as the Proton acceptor in catalysis.

Belongs to the AcnX type II small subunit family. As to quaternary structure, heterodimer composed of a large subunit (PMDh-L) and a small subunit (PMDh-S).

It carries out the reaction (R)-5-phosphomevalonate = (2E)-3-methyl-5-phosphooxypent-2-enoate + H2O. It participates in isoprenoid biosynthesis; isopentenyl diphosphate biosynthesis via mevalonate pathway. Its function is as follows. Component of a hydro-lyase that catalyzes the dehydration of mevalonate 5-phosphate (MVA5P) to form trans-anhydromevalonate 5-phosphate (tAHMP). Involved in the archaeal mevalonate (MVA) pathway, which provides fundamental precursors for isoprenoid biosynthesis, such as isopentenyl diphosphate (IPP) and dimethylallyl diphosphate (DMAPP). The sequence is that of Phosphomevalonate dehydratase small subunit from Pyrococcus furiosus (strain ATCC 43587 / DSM 3638 / JCM 8422 / Vc1).